A 135-amino-acid chain; its full sequence is Glutaredoxin-C5 (135 aa).

In terms of domain architecture, Glutaredoxin spans 29–134; it reads AERVERLASE…PLLKEAGALW (106 aa). Cysteines 49 and 52 form a disulfide. Residues 132–135 carry the Responsive for interaction with TGA factors motif; sequence ALWL.

This sequence belongs to the glutaredoxin family. CC-type subfamily.

It is found in the cytoplasm. Its subcellular location is the nucleus. In terms of biological role, has a glutathione-disulfide oxidoreductase activity in the presence of NADPH and glutathione reductase. Reduces low molecular weight disulfides and proteins. The polypeptide is Glutaredoxin-C5 (GRXC5) (Oryza sativa subsp. japonica (Rice)).